A 440-amino-acid polypeptide reads, in one-letter code: F-box protein pof12 (440 aa).

The region spanning K8 to L54 is the F-box domain.

Interacts with skp1.

The protein resides in the nucleus. This Schizosaccharomyces pombe (strain 972 / ATCC 24843) (Fission yeast) protein is F-box protein pof12 (pof12).